The sequence spans 106 residues: uncharacterized protein (106 aa).

This is an uncharacterized protein from Escherichia coli (strain K12).